The chain runs to 61 residues: Probable tautomerase SSP1389 (61 aa).

P2 acts as the Proton acceptor; via imino nitrogen in catalysis.

The protein belongs to the 4-oxalocrotonate tautomerase family.

The polypeptide is Probable tautomerase SSP1389 (Staphylococcus saprophyticus subsp. saprophyticus (strain ATCC 15305 / DSM 20229 / NCIMB 8711 / NCTC 7292 / S-41)).